The following is a 344-amino-acid chain: N-lysine methyltransferase KMT5A-A (344 aa).

The disordered stretch occupies residues 143 to 176; the sequence is TSSKHRKPARRKVKRSTKRAAESKSPANRKVTDY. Over residues 145-160 the composition is skewed to basic residues; sequence SKHRKPARRKVKRSTK. Positions 208–329 constitute an SET domain; it reads DGMMVRFIEG…EGEELLYDYG (122 aa). Residues 218–220, Tyr-263, and 290–291 each bind S-adenosyl-L-methionine; these read KGR and NH.

This sequence belongs to the class V-like SAM-binding methyltransferase superfamily. Histone-lysine methyltransferase family. PR/SET subfamily.

Its subcellular location is the nucleus. The protein localises to the chromosome. It carries out the reaction L-lysyl(20)-[histone H4] + S-adenosyl-L-methionine = N(6)-methyl-L-lysyl(20)-[histone H4] + S-adenosyl-L-homocysteine + H(+). It catalyses the reaction L-lysyl-[protein] + S-adenosyl-L-methionine = N(6)-methyl-L-lysyl-[protein] + S-adenosyl-L-homocysteine + H(+). In terms of biological role, protein-lysine N-methyltransferase that monomethylates both histones and non-histone proteins. Specifically monomethylates 'Lys-20' of histone H4 (H4K20me1). H4K20me1 is enriched during mitosis and represents a specific tag for epigenetic transcriptional repression. Mainly functions in euchromatin regions, thereby playing a central role in the silencing of euchromatic genes. Required for cell proliferation, probably by contributing to the maintenance of proper higher-order structure of DNA during mitosis. Involved in chromosome condensation and proper cytokinesis. The protein is N-lysine methyltransferase KMT5A-A of Danio rerio (Zebrafish).